We begin with the raw amino-acid sequence, 478 residues long: Secretogranin-3 (478 aa).

The signal sequence occupies residues 1–21 (MASKRLGFVVVLALVCQHINA). 2 disordered regions span residues 22–126 (FPTP…NGMD) and 208–287 (IGDR…EDGL). Positions 28-42 (PDDKYNRELTEEKPL) are enriched in basic and acidic residues. A compositionally biased stretch (acidic residues) spans 63–74 (AEEETNSEDDDI). Over residues 97–120 (ANERLGADDTDSTKNRRLADDYDS) the composition is skewed to basic and acidic residues. The span at 235 to 259 (DEEDEVENEGGDDANGDEPQEEESR) shows a compositional bias: acidic residues.

The protein localises to the cytoplasmic vesicle. It is found in the secretory vesicle lumen. It localises to the secretory vesicle membrane. The protein resides in the secreted. The polypeptide is Secretogranin-3 (scg3) (Danio rerio (Zebrafish)).